We begin with the raw amino-acid sequence, 510 residues long: Gelatinase (510 aa).

Residues 1–30 (MMKGNKILYILGTGIFVGSSCLFSSLFVAA) form the signal peptide. Positions 31-192 (EEQVYSESEV…IMEKQDLTEH (162 aa)) are excised as a propeptide. Position 324 (Asp324) interacts with Ca(2+). His328 contributes to the Zn(2+) binding site. The active site involves Glu329. The Zn(2+) site is built by His332 and Glu352. Residue Ser376 participates in Ca(2+) binding. The active-site Proton donor is His419.

Belongs to the peptidase M4 family.

The protein localises to the secreted. It carries out the reaction Preferential cleavage: Xaa-|-Leu, Xaa-|-Phe, Xaa-|-Tyr, Xaa-|-Ala.. Its activity is regulated as follows. Inhibited by L-leucine hydroxamate and phosphoramidon. Not inhibited by phenylmethanesulfonyl fluoride. Reversibly inactivated by straight-chain aliphatic alcohols. In terms of biological role, metalloprotease capable of the hydrolysis of insoluble hydrophobic substrates. Hydrolyzes azocoll and gelatin and, at a lower rate, soluble and insoluble collagens. Does not cleave short synthetic peptides. Preferentially hydrolyzes the 24-Phe-|-Phe-25 bond in the insulin B-chain, followed by the 5-His-|-Leu-6 bond. Inactivates endothelin-1, primarily by cleavage of the 5-Ser-|-Leu-6 and 16-His-|-Leu-17 bonds. Hydrolyzes the alpha chain of C3 to generate a C3b-like protein. Inhibits complement-mediated hemolysis and opsinization of bacteria. Hydrolyzes the insect antimicrobial peptide cecropin. Decreases the length of E.faecalis chains via the activation of autolysin. Degrades polymerized fibrin. The polypeptide is Gelatinase (Enterococcus faecalis (strain ATCC 700802 / V583)).